The chain runs to 81 residues: MESKRSSSSPLLILITTIMIIFIISGPKSVDADCKHPVGPYTDSCFTDCVSGKYGYNYESAFCSRDETGTCKICCCELINE.

Positions 1–32 (MESKRSSSSPLLILITTIMIIFIISGPKSVDA) are cleaved as a signal peptide. Disulfide bonds link cysteine 34–cysteine 63, cysteine 45–cysteine 74, and cysteine 49–cysteine 76.

Belongs to the DEFL family.

It localises to the secreted. The polypeptide is Defensin-like protein 313 (Arabidopsis thaliana (Mouse-ear cress)).